We begin with the raw amino-acid sequence, 139 residues long: MPPAKKGPATSARKGQKTRRREKKNVPHGAAHIKSTFNNTIVTITDPQGNVIAWASSGHVGFKGSRKSTPFAAQLAAENAARKAQDHGVRKVDVFVKGPGSGRETAIRSLQAAGLEVGAISDVTPQPHNGVRPPKRRRV.

Disordered regions lie at residues 1–33 (MPPA…AAHI) and 118–139 (GAIS…RRRV). A compositionally biased stretch (basic residues) spans 14–23 (KGQKTRRREK).

Belongs to the universal ribosomal protein uS11 family. Part of the 30S ribosomal subunit. Interacts with proteins S7 and S18. Binds to IF-3.

Its function is as follows. Located on the platform of the 30S subunit, it bridges several disparate RNA helices of the 16S rRNA. Forms part of the Shine-Dalgarno cleft in the 70S ribosome. This Mycobacterium tuberculosis (strain ATCC 25177 / H37Ra) protein is Small ribosomal subunit protein uS11.